The following is a 545-amino-acid chain: Chaperonin GroEL (545 aa).

ATP-binding positions include 30–33 (TLGP), K51, 87–91 (DGTTT), G415, and D495.

The protein belongs to the chaperonin (HSP60) family. In terms of assembly, forms a cylinder of 14 subunits composed of two heptameric rings stacked back-to-back. Interacts with the co-chaperonin GroES.

The protein resides in the cytoplasm. It carries out the reaction ATP + H2O + a folded polypeptide = ADP + phosphate + an unfolded polypeptide.. Functionally, together with its co-chaperonin GroES, plays an essential role in assisting protein folding. The GroEL-GroES system forms a nano-cage that allows encapsulation of the non-native substrate proteins and provides a physical environment optimized to promote and accelerate protein folding. The sequence is that of Chaperonin GroEL from Shewanella sp. (strain MR-7).